The primary structure comprises 440 residues: N-succinylarginine dihydrolase (440 aa).

Substrate-binding positions include 17–26 (GGLSPGNLAS), asparagine 108, and 135–136 (HR). Residues 17–37 (GGLSPGNLASQSHVGEPSHPR) form a disordered region. Glutamate 172 is a catalytic residue. Position 210 (arginine 210) interacts with substrate. The active site involves histidine 246. Substrate contacts are provided by aspartate 248 and asparagine 358. The Nucleophile role is filled by cysteine 364.

Belongs to the succinylarginine dihydrolase family. Homodimer.

The enzyme catalyses N(2)-succinyl-L-arginine + 2 H2O + 2 H(+) = N(2)-succinyl-L-ornithine + 2 NH4(+) + CO2. The protein operates within amino-acid degradation; L-arginine degradation via AST pathway; L-glutamate and succinate from L-arginine: step 2/5. Its function is as follows. Catalyzes the hydrolysis of N(2)-succinylarginine into N(2)-succinylornithine, ammonia and CO(2). This Myxococcus xanthus (strain DK1622) protein is N-succinylarginine dihydrolase.